The chain runs to 424 residues: Serine--tRNA ligase (424 aa).

231–233 (TAE) provides a ligand contact to L-serine. Residue 262–264 (RSE) participates in ATP binding. Glutamate 285 contacts L-serine. An ATP-binding site is contributed by 349 to 352 (EISS). Residue serine 385 coordinates L-serine.

This sequence belongs to the class-II aminoacyl-tRNA synthetase family. Type-1 seryl-tRNA synthetase subfamily. As to quaternary structure, homodimer. The tRNA molecule binds across the dimer.

It is found in the cytoplasm. It carries out the reaction tRNA(Ser) + L-serine + ATP = L-seryl-tRNA(Ser) + AMP + diphosphate + H(+). The enzyme catalyses tRNA(Sec) + L-serine + ATP = L-seryl-tRNA(Sec) + AMP + diphosphate + H(+). It participates in aminoacyl-tRNA biosynthesis; selenocysteinyl-tRNA(Sec) biosynthesis; L-seryl-tRNA(Sec) from L-serine and tRNA(Sec): step 1/1. In terms of biological role, catalyzes the attachment of serine to tRNA(Ser). Is also able to aminoacylate tRNA(Sec) with serine, to form the misacylated tRNA L-seryl-tRNA(Sec), which will be further converted into selenocysteinyl-tRNA(Sec). The sequence is that of Serine--tRNA ligase from Bacillus anthracis (strain A0248).